A 280-amino-acid polypeptide reads, in one-letter code: Ribosomal RNA small subunit methyltransferase A (280 aa).

S-adenosyl-L-methionine is bound by residues H13, L15, G40, E61, D85, and N106. Residues 258-280 (RPPADVEDANAPHTEQGKGDNSQ) form a disordered region.

Belongs to the class I-like SAM-binding methyltransferase superfamily. rRNA adenine N(6)-methyltransferase family. RsmA subfamily.

It localises to the cytoplasm. The catalysed reaction is adenosine(1518)/adenosine(1519) in 16S rRNA + 4 S-adenosyl-L-methionine = N(6)-dimethyladenosine(1518)/N(6)-dimethyladenosine(1519) in 16S rRNA + 4 S-adenosyl-L-homocysteine + 4 H(+). Functionally, specifically dimethylates two adjacent adenosines (A1518 and A1519) in the loop of a conserved hairpin near the 3'-end of 16S rRNA in the 30S particle. May play a critical role in biogenesis of 30S subunits. The sequence is that of Ribosomal RNA small subunit methyltransferase A from Alcanivorax borkumensis (strain ATCC 700651 / DSM 11573 / NCIMB 13689 / SK2).